A 180-amino-acid chain; its full sequence is Large ribosomal subunit protein uL5 (180 aa).

It belongs to the universal ribosomal protein uL5 family. In terms of assembly, part of the 50S ribosomal subunit; part of the 5S rRNA/L5/L18/L25 subcomplex. Contacts the 5S rRNA and the P site tRNA. Forms a bridge to the 30S subunit in the 70S ribosome.

In terms of biological role, this is one of the proteins that bind and probably mediate the attachment of the 5S RNA into the large ribosomal subunit, where it forms part of the central protuberance. In the 70S ribosome it contacts protein S13 of the 30S subunit (bridge B1b), connecting the 2 subunits; this bridge is implicated in subunit movement. Contacts the P site tRNA; the 5S rRNA and some of its associated proteins might help stabilize positioning of ribosome-bound tRNAs. This chain is Large ribosomal subunit protein uL5, found in Clostridium tetani (strain Massachusetts / E88).